Here is a 342-residue protein sequence, read N- to C-terminus: Pre-mRNA-splicing factor 18 (342 aa).

The protein belongs to the PRP18 family. In terms of assembly, interacts with the spliceosome. Part of a complex containing U4/U6 snRNPs.

Its subcellular location is the nucleus speckle. Functionally, participates in the second step of pre-mRNA splicing. This is Pre-mRNA-splicing factor 18 (prpf18) from Danio rerio (Zebrafish).